The sequence spans 180 residues: ADP-ribosylation factor 4 (180 aa).

Residue G2 is the site of N-myristoyl glycine attachment. GTP contacts are provided by residues 24–31 (GLDAAGKT), 67–71 (DVGGQ), and 126–129 (NKQD). S147 carries the post-translational modification Phosphoserine.

This sequence belongs to the small GTPase superfamily. Arf family. Forms a complex containing RAB11A, ASAP1, RAB3IP, RAP11FIP3 and ARF4; the complex promotes preciliary trafficking; the complex binds to RHO in photoreceptor cells and promotes RHO ciliary transport.

It is found in the golgi apparatus. Its subcellular location is the membrane. GTP-binding protein that functions as an allosteric activator of the cholera toxin catalytic subunit, an ADP-ribosyltransferase. Involved in protein trafficking; may modulate vesicle budding and uncoating within the Golgi apparatus. Part of the ciliary targeting complex containing Rab11, ASAP1, Rabin8/RAB3IP, RAB11FIP3 and ARF4, which direct preciliary vesicle trafficking to mother centriole and ciliogenesis initiation. This is ADP-ribosylation factor 4 (ARF4) from Bos taurus (Bovine).